We begin with the raw amino-acid sequence, 154 residues long: Large ribosomal subunit protein uL13 (154 aa).

The protein belongs to the universal ribosomal protein uL13 family. Part of the 50S ribosomal subunit.

In terms of biological role, this protein is one of the early assembly proteins of the 50S ribosomal subunit, although it is not seen to bind rRNA by itself. It is important during the early stages of 50S assembly. The chain is Large ribosomal subunit protein uL13 from Brucella canis (strain ATCC 23365 / NCTC 10854 / RM-666).